The chain runs to 318 residues: Acetyl-coenzyme A carboxylase carboxyl transferase subunit alpha (318 aa).

A CoA carboxyltransferase C-terminal domain is found at Asn-32 to Arg-293.

It belongs to the AccA family. Acetyl-CoA carboxylase is a heterohexamer composed of biotin carboxyl carrier protein (AccB), biotin carboxylase (AccC) and two subunits each of ACCase subunit alpha (AccA) and ACCase subunit beta (AccD).

The protein resides in the cytoplasm. It catalyses the reaction N(6)-carboxybiotinyl-L-lysyl-[protein] + acetyl-CoA = N(6)-biotinyl-L-lysyl-[protein] + malonyl-CoA. The protein operates within lipid metabolism; malonyl-CoA biosynthesis; malonyl-CoA from acetyl-CoA: step 1/1. Its function is as follows. Component of the acetyl coenzyme A carboxylase (ACC) complex. First, biotin carboxylase catalyzes the carboxylation of biotin on its carrier protein (BCCP) and then the CO(2) group is transferred by the carboxyltransferase to acetyl-CoA to form malonyl-CoA. The sequence is that of Acetyl-coenzyme A carboxylase carboxyl transferase subunit alpha from Halorhodospira halophila (strain DSM 244 / SL1) (Ectothiorhodospira halophila (strain DSM 244 / SL1)).